A 302-amino-acid chain; its full sequence is Recombination-associated protein RdgC (302 aa).

This sequence belongs to the RdgC family.

Its subcellular location is the cytoplasm. The protein resides in the nucleoid. In terms of biological role, may be involved in recombination. The chain is Recombination-associated protein RdgC from Actinobacillus pleuropneumoniae serotype 5b (strain L20).